We begin with the raw amino-acid sequence, 139 residues long: GSK3B-interacting protein (139 aa).

Positions 41 to 45 (VNDVL) are required for PRKAR2A interaction; contributes to a protective effect against H(2)O(2)-induced apoptosis. Residues 115–139 (SPAYREAFGNALLQRLEALKRDGQS) form an interaction with GSK3B and acts as a GSK3B inhibitor region.

Belongs to the GSKIP family. Forms a complex composed of PRKAR2A or PRKAR2B, GSK3B and GSKIP through GSKIP interaction; facilitates PKA-induced phosphorylation of GSK3B leading to GSK3B inactivation; recruits DNM1L through GSK3B for PKA-mediated phosphorylation of DNM1L; promotes beta-catenin degradation through GSK3B-induced phosphorylation of beta-catenin; stabilizes beta-catenin and enhances Wnt-induced signaling through PKA-induced phosphorylation of beta-catenin. Interacts with GSK3B; induces GSK3B-mediated phosphorylation of GSKIP and inhibits GSK3B kinase activity. Phosphorylated by GSK3B.

The protein localises to the cytoplasm. It localises to the nucleus. Functionally, A-kinase anchoring protein for GSK3B and PKA that regulates or facilitates their kinase activity towards their targets. The ternary complex enhances Wnt-induced signaling by facilitating the GSK3B- and PKA-induced phosphorylation of beta-catenin leading to beta-catenin degradation and stabilization respectively. Upon cAMP activation, the ternary complex contributes to neuroprotection against oxidative stress-induced apoptosis by facilitating the PKA-induced phosphorylation of DML1 and PKA-induced inactivation of GSK3B. During neurite outgrowth promotes neuron proliferation; while increases beta-catenin-induced transcriptional activity through GSK3B kinase activity inhibition, reduces N-cadherin level to promote cell cycle progression. May play a role in cleft palate formation and is required for postnatal life through modulation of the activity of GSK3B during development. The sequence is that of GSK3B-interacting protein from Mus musculus (Mouse).